The following is a 265-amino-acid chain: Silencing boundary-establishment protein FUB1-like protein (265 aa).

Residues 194–265 (HPENRSRNEQ…MPPGSSDMFM (72 aa)) form a disordered region.

This sequence belongs to the proteasome inhibitor PI31 family. In terms of assembly, interacts with the 20S proteasome.

It localises to the cytoplasm. The protein resides in the nucleus. May play a role in the establishment of transcriptional silencing boundaries, preventing the propagation of heterochromatic silencing. The protein is Silencing boundary-establishment protein FUB1-like protein of Schizosaccharomyces pombe (strain 972 / ATCC 24843) (Fission yeast).